We begin with the raw amino-acid sequence, 533 residues long: UDP-glucuronosyltransferase 1-2 (533 aa).

A signal peptide spans 1–27 (MDTGLCVPLRGISGLLLLLCALPWAEG). N-linked (GlcNAc...) asparagine glycosylation is found at Asn141, Asn295, and Asn433. A helical transmembrane segment spans residues 491–511 (VIGFLLAIVLTVVFIVFKCCA).

Belongs to the UDP-glycosyltransferase family. In terms of tissue distribution, expressed in kidney.

The protein localises to the microsome. Its subcellular location is the endoplasmic reticulum membrane. The catalysed reaction is glucuronate acceptor + UDP-alpha-D-glucuronate = acceptor beta-D-glucuronoside + UDP + H(+). UDPGT is of major importance in the conjugation and subsequent elimination of potentially toxic xenobiotics and endogenous compounds. This Mus musculus (Mouse) protein is UDP-glucuronosyltransferase 1-2 (Ugt1a2).